The following is a 226-amino-acid chain: PKHD-type hydroxylase PLES_48951 (226 aa).

One can recognise a Fe2OG dioxygenase domain in the interval 78–178 (KVFPPLFNCY…RYASFFWTQS (101 aa)). 3 residues coordinate Fe cation: His96, Asp98, and His159. Arg169 is a binding site for 2-oxoglutarate.

It depends on Fe(2+) as a cofactor. L-ascorbate is required as a cofactor.

The polypeptide is PKHD-type hydroxylase PLES_48951 (Pseudomonas aeruginosa (strain LESB58)).